The following is a 399-amino-acid chain: CCA-adding enzyme (399 aa).

ATP is bound by residues Gly32 and Arg35. Gly32 and Arg35 together coordinate CTP. Residues Asp45 and Asp47 each contribute to the Mg(2+) site. ATP is bound by residues Arg116, Asp159, Arg162, Arg165, and Arg168. 5 residues coordinate CTP: Arg116, Asp159, Arg162, Arg165, and Arg168.

This sequence belongs to the tRNA nucleotidyltransferase/poly(A) polymerase family. Bacterial CCA-adding enzyme type 3 subfamily. In terms of assembly, homodimer. It depends on Mg(2+) as a cofactor.

It catalyses the reaction a tRNA precursor + 2 CTP + ATP = a tRNA with a 3' CCA end + 3 diphosphate. The enzyme catalyses a tRNA with a 3' CCA end + 2 CTP + ATP = a tRNA with a 3' CCACCA end + 3 diphosphate. In terms of biological role, catalyzes the addition and repair of the essential 3'-terminal CCA sequence in tRNAs without using a nucleic acid template. Adds these three nucleotides in the order of C, C, and A to the tRNA nucleotide-73, using CTP and ATP as substrates and producing inorganic pyrophosphate. tRNA 3'-terminal CCA addition is required both for tRNA processing and repair. Also involved in tRNA surveillance by mediating tandem CCA addition to generate a CCACCA at the 3' terminus of unstable tRNAs. While stable tRNAs receive only 3'-terminal CCA, unstable tRNAs are marked with CCACCA and rapidly degraded. This Streptococcus sanguinis (strain SK36) protein is CCA-adding enzyme.